Here is a 326-residue protein sequence, read N- to C-terminus: Phospho-N-acetylmuramoyl-pentapeptide-transferase (326 aa).

Helical transmembrane passes span 13 to 33 (ILAPLIMGFLFSIVLGPIFIP), 57 to 77 (GTPTMGGLIFFIATATAILIM), 85 to 105 (EMILLYSFLAFGFIGFLDDIL), 121 to 141 (MILLVLFSVALAWYGYTNVGT), 155 to 175 (NLGILYIPFIVVYYAAVTNAV), 181 to 201 (IDGLATSVTVIVLTFFAIIGF), 208 to 228 (VAVFAIALAGALLGFLKFNAF), 232 to 252 (IFMGDTGSLALGGVIGTIALM), 257 to 277 (LFVIIVGGIYLIETLSVIIQV), and 305 to 325 (VKIVTIFSSITAILCIIGFVA).

The protein belongs to the glycosyltransferase 4 family. MraY subfamily. Requires Mg(2+) as cofactor.

The protein localises to the cell membrane. The catalysed reaction is UDP-N-acetyl-alpha-D-muramoyl-L-alanyl-gamma-D-glutamyl-meso-2,6-diaminopimeloyl-D-alanyl-D-alanine + di-trans,octa-cis-undecaprenyl phosphate = di-trans,octa-cis-undecaprenyl diphospho-N-acetyl-alpha-D-muramoyl-L-alanyl-D-glutamyl-meso-2,6-diaminopimeloyl-D-alanyl-D-alanine + UMP. It functions in the pathway cell wall biogenesis; peptidoglycan biosynthesis. Catalyzes the initial step of the lipid cycle reactions in the biosynthesis of the cell wall peptidoglycan: transfers peptidoglycan precursor phospho-MurNAc-pentapeptide from UDP-MurNAc-pentapeptide onto the lipid carrier undecaprenyl phosphate, yielding undecaprenyl-pyrophosphoryl-MurNAc-pentapeptide, known as lipid I. The polypeptide is Phospho-N-acetylmuramoyl-pentapeptide-transferase (Clostridium beijerinckii (strain ATCC 51743 / NCIMB 8052) (Clostridium acetobutylicum)).